The primary structure comprises 408 residues: Phosphoglycerate kinase (408 aa).

Residues Asp-24 to Asn-26, Arg-39, His-62 to Arg-65, Arg-121, and Arg-161 each bind substrate. ATP-binding positions include Lys-211, Gly-307, Glu-338, and Gly-364 to Ser-367.

This sequence belongs to the phosphoglycerate kinase family. In terms of assembly, monomer.

It localises to the cytoplasm. The catalysed reaction is (2R)-3-phosphoglycerate + ATP = (2R)-3-phospho-glyceroyl phosphate + ADP. It participates in carbohydrate degradation; glycolysis; pyruvate from D-glyceraldehyde 3-phosphate: step 2/5. This chain is Phosphoglycerate kinase, found in Pseudarthrobacter chlorophenolicus (strain ATCC 700700 / DSM 12829 / CIP 107037 / JCM 12360 / KCTC 9906 / NCIMB 13794 / A6) (Arthrobacter chlorophenolicus).